A 975-amino-acid polypeptide reads, in one-letter code: GPI inositol-deacylase (975 aa).

Residues 27 to 47 (STLVIIVGLLLLCIITSTHIS) form a helical membrane-spanning segment. An N-linked (GlcNAc...) asparagine glycan is attached at asparagine 49. Serine 210 is an active-site residue. Residues asparagine 276, asparagine 384, asparagine 407, asparagine 419, and asparagine 488 are each glycosylated (N-linked (GlcNAc...) asparagine). A helical transmembrane segment spans residues 655–675 (LAFASIPISIIALVLCYQFYY). N-linked (GlcNAc...) asparagine glycosylation occurs at asparagine 696. The next 3 membrane-spanning stretches (helical) occupy residues 699–719 (LLIF…AILT), 751–771 (FVWW…FIIL), and 818–838 (VCFI…FILV). Asparagine 867 carries an N-linked (GlcNAc...) asparagine glycan. Transmembrane regions (helical) follow at residues 868–888 (VSFL…VVVF), 932–952 (NWLI…MYGI), and 955–975 (LYWV…LTIL).

This sequence belongs to the GPI inositol-deacylase family.

The protein localises to the endoplasmic reticulum membrane. Functionally, involved in inositol deacylation of GPI-anchored proteins which plays important roles in the quality control and ER-associated degradation of GPI-anchored proteins. This chain is GPI inositol-deacylase (BST1), found in Kluyveromyces lactis (strain ATCC 8585 / CBS 2359 / DSM 70799 / NBRC 1267 / NRRL Y-1140 / WM37) (Yeast).